The chain runs to 290 residues: 33 kDa chaperonin (290 aa).

2 disulfides stabilise this stretch: Cys-235–Cys-237 and Cys-268–Cys-271.

It belongs to the HSP33 family. Under oxidizing conditions two disulfide bonds are formed involving the reactive cysteines. Under reducing conditions zinc is bound to the reactive cysteines and the protein is inactive.

It localises to the cytoplasm. Redox regulated molecular chaperone. Protects both thermally unfolding and oxidatively damaged proteins from irreversible aggregation. Plays an important role in the bacterial defense system toward oxidative stress. This chain is 33 kDa chaperonin, found in Streptococcus pyogenes serotype M28 (strain MGAS6180).